Reading from the N-terminus, the 574-residue chain is Glutamate--tRNA ligase (574 aa).

Positions 109-119 (PNPDFVIHMGN) match the 'HIGH' region motif.

This sequence belongs to the class-I aminoacyl-tRNA synthetase family. Glutamate--tRNA ligase type 2 subfamily.

It is found in the cytoplasm. It carries out the reaction tRNA(Glu) + L-glutamate + ATP = L-glutamyl-tRNA(Glu) + AMP + diphosphate. Its function is as follows. Catalyzes the attachment of glutamate to tRNA(Glu) in a two-step reaction: glutamate is first activated by ATP to form Glu-AMP and then transferred to the acceptor end of tRNA(Glu). The chain is Glutamate--tRNA ligase from Aeropyrum pernix (strain ATCC 700893 / DSM 11879 / JCM 9820 / NBRC 100138 / K1).